The following is a 53-amino-acid chain: Collagen alpha-1(I) chain (53 aa).

The tract at residues 1–53 is disordered; sequence SYGYBZKSAGVSVPGPMGPSGPRGLPGPPGAPGPZGFZGPPGZPGZPGSSGPM. Lys-7 carries the allysine modification. Position 8 is a phosphoserine (Ser-8). A compositionally biased stretch (low complexity) spans 10–23; the sequence is GVSVPGPMGPSGPR. 4-hydroxyproline is present on residues Pro-26, Pro-29, Pro-32, Pro-41, Pro-44, and Pro-47. The span at 34-53 shows a compositional bias: low complexity; sequence PZGFZGPPGZPGZPGSSGPM.

Belongs to the fibrillar collagen family. As to quaternary structure, trimers of one alpha 2(I) and two alpha 1(I) chains. Interacts with MRC2. Interacts with TRAM2. Interacts with MFAP4 in a Ca (2+)-dependent manner. Post-translationally, contains mostly 4-hydroxyproline. Proline residues at the third position of the tripeptide repeating unit (G-X-Y) are hydroxylated in some or all of the chains. Contains 3-hydroxyproline at a few sites. This modification occurs on the first proline residue in the sequence motif Gly-Pro-Hyp, where Hyp is 4-hydroxyproline. In terms of processing, lysine residues at the third position of the tripeptide repeating unit (G-X-Y) are 5-hydroxylated in some or all of the chains. Post-translationally, O-glycosylated on hydroxylated lysine residues. The O-linked glycan consists of a Glc-Gal disaccharide. In terms of tissue distribution, forms the fibrils of tendon, ligaments and bones. In bones the fibrils are mineralized with calcium hydroxyapatite.

The protein localises to the secreted. It localises to the extracellular space. It is found in the extracellular matrix. Type I collagen is a member of group I collagen (fibrillar forming collagen). The protein is Collagen alpha-1(I) chain (COL1A1) of Oryctolagus cuniculus (Rabbit).